A 317-amino-acid chain; its full sequence is uncharacterized protein (317 aa).

A signal peptide spans 1-16 (MKLSFILSTLVAGALA). An N-linked (GlcNAc...) asparagine glycan is attached at asparagine 42. Low complexity-rich tracts occupy residues 150–238 (SSST…SSSS) and 247–259 (TAST…ASSA). Residues 150-259 (SSSTPSSSSS…TDDSSSASSA (110 aa)) form a disordered region.

This is an uncharacterized protein from Schizosaccharomyces pombe (strain 972 / ATCC 24843) (Fission yeast).